The primary structure comprises 361 residues: Phospho-N-acetylmuramoyl-pentapeptide-transferase (361 aa).

10 helical membrane passes run Leu-28–Leu-48, Thr-73–Leu-93, Tyr-97–Tyr-117, Phe-134–Leu-154, Val-168–Thr-188, Gly-200–Ala-220, Ala-237–Phe-257, Val-264–Ile-284, Ile-289–Val-309, and Gln-338–Leu-358.

The protein belongs to the glycosyltransferase 4 family. MraY subfamily. Mg(2+) serves as cofactor.

The protein localises to the cell inner membrane. It carries out the reaction UDP-N-acetyl-alpha-D-muramoyl-L-alanyl-gamma-D-glutamyl-meso-2,6-diaminopimeloyl-D-alanyl-D-alanine + di-trans,octa-cis-undecaprenyl phosphate = di-trans,octa-cis-undecaprenyl diphospho-N-acetyl-alpha-D-muramoyl-L-alanyl-D-glutamyl-meso-2,6-diaminopimeloyl-D-alanyl-D-alanine + UMP. It functions in the pathway cell wall biogenesis; peptidoglycan biosynthesis. Its function is as follows. Catalyzes the initial step of the lipid cycle reactions in the biosynthesis of the cell wall peptidoglycan: transfers peptidoglycan precursor phospho-MurNAc-pentapeptide from UDP-MurNAc-pentapeptide onto the lipid carrier undecaprenyl phosphate, yielding undecaprenyl-pyrophosphoryl-MurNAc-pentapeptide, known as lipid I. The chain is Phospho-N-acetylmuramoyl-pentapeptide-transferase from Nitrosomonas europaea (strain ATCC 19718 / CIP 103999 / KCTC 2705 / NBRC 14298).